Consider the following 591-residue polypeptide: Aspartate--tRNA ligase (591 aa).

E173 serves as a coordination point for L-aspartate. An aspartate region spans residues 197 to 200 (QLFK). L-aspartate is bound at residue R219. Residues 219 to 221 (RDE) and Q228 each bind ATP. H446 is an L-aspartate binding site. E482 contributes to the ATP binding site. R489 contacts L-aspartate. Position 534-537 (534-537 (GLDR)) interacts with ATP.

This sequence belongs to the class-II aminoacyl-tRNA synthetase family. Type 1 subfamily. In terms of assembly, homodimer.

The protein resides in the cytoplasm. The catalysed reaction is tRNA(Asp) + L-aspartate + ATP = L-aspartyl-tRNA(Asp) + AMP + diphosphate. Catalyzes the attachment of L-aspartate to tRNA(Asp) in a two-step reaction: L-aspartate is first activated by ATP to form Asp-AMP and then transferred to the acceptor end of tRNA(Asp). This Limosilactobacillus fermentum (strain NBRC 3956 / LMG 18251) (Lactobacillus fermentum) protein is Aspartate--tRNA ligase.